The following is a 999-amino-acid chain: uncharacterized protein (999 aa).

The span at 45–128 shows a compositional bias: low complexity; sequence NSNNIGNGNG…TPTITPSSPS (84 aa). Positions 45–129 are disordered; it reads NSNNIGNGNG…PTITPSSPSV (85 aa). The stretch at 723-767 forms a coiled coil; that stretch reads YQQSQQQQSQQQQQQQQQQQQQQQQQQQQQQQQQQQQQQQQQQQQ. A compositionally biased stretch (low complexity) spans 873 to 887; that stretch reads NDINNANNSNNNNNN. Residues 873 to 904 form a disordered region; sequence NDINNANNSNNNNNNQSQVLLSPNRNKDGTLN. The chain crosses the membrane as a helical span at residues 976–996; that stretch reads LFSLVLILAFIWFFFEIYFFF.

It localises to the membrane. This is an uncharacterized protein from Dictyostelium discoideum (Social amoeba).